The primary structure comprises 93 residues: uncharacterized protein (93 aa).

2 helical membrane passes run 7 to 27 (LIFLGIILMFIGFFMITLGMI) and 70 to 90 (ILSVLIAILMIIWMFLFAFGI).

It is found in the cell membrane. This is an uncharacterized protein from Methanocaldococcus jannaschii (strain ATCC 43067 / DSM 2661 / JAL-1 / JCM 10045 / NBRC 100440) (Methanococcus jannaschii).